The chain runs to 325 residues: Homoserine O-succinyltransferase (325 aa).

The active-site Acyl-thioester intermediate is the Cys142. Residues Lys163 and Ser191 each coordinate substrate. His234 (proton acceptor) is an active-site residue. Glu236 is an active-site residue. Arg248 contributes to the substrate binding site.

This sequence belongs to the MetA family.

It is found in the cytoplasm. The enzyme catalyses L-homoserine + succinyl-CoA = O-succinyl-L-homoserine + CoA. It participates in amino-acid biosynthesis; L-methionine biosynthesis via de novo pathway; O-succinyl-L-homoserine from L-homoserine: step 1/1. In terms of biological role, transfers a succinyl group from succinyl-CoA to L-homoserine, forming succinyl-L-homoserine. The sequence is that of Homoserine O-succinyltransferase from Bradyrhizobium japonicum.